The sequence spans 322 residues: Protein-L-isoaspartate O-methyltransferase (322 aa).

The tract at residues 1–101 is disordered; it reads MSGERAKRFP…AKQGDRSAAP (101 aa). A compositionally biased stretch (basic and acidic residues) spans 14-29; sequence EDLKREPRKPEGRVAE. Low complexity-rich tracts occupy residues 33–51 and 67–91; these read AGDA…PAAA and AANP…PQGG. Ser170 is an active-site residue.

Belongs to the methyltransferase superfamily. L-isoaspartyl/D-aspartyl protein methyltransferase family.

The protein resides in the cytoplasm. It catalyses the reaction [protein]-L-isoaspartate + S-adenosyl-L-methionine = [protein]-L-isoaspartate alpha-methyl ester + S-adenosyl-L-homocysteine. Functionally, catalyzes the methyl esterification of L-isoaspartyl residues in peptides and proteins that result from spontaneous decomposition of normal L-aspartyl and L-asparaginyl residues. It plays a role in the repair and/or degradation of damaged proteins. This chain is Protein-L-isoaspartate O-methyltransferase, found in Burkholderia pseudomallei (strain 668).